A 109-amino-acid polypeptide reads, in one-letter code: Ribonuclease P protein component (109 aa).

Belongs to the RnpA family. In terms of assembly, consists of a catalytic RNA component (M1 or rnpB) and a protein subunit.

The catalysed reaction is Endonucleolytic cleavage of RNA, removing 5'-extranucleotides from tRNA precursor.. Its function is as follows. RNaseP catalyzes the removal of the 5'-leader sequence from pre-tRNA to produce the mature 5'-terminus. It can also cleave other RNA substrates such as 4.5S RNA. The protein component plays an auxiliary but essential role in vivo by binding to the 5'-leader sequence and broadening the substrate specificity of the ribozyme. This chain is Ribonuclease P protein component, found in Streptococcus agalactiae serotype Ia (strain ATCC 27591 / A909 / CDC SS700).